Reading from the N-terminus, the 538-residue chain is Putative outer membrane porin BglH (538 aa).

The N-terminal stretch at M1 to A25 is a signal peptide.

Belongs to the porin LamB (TC 1.B.3) family.

The protein localises to the cell outer membrane. Its function is as follows. May be a sugar porin with a broad carbohydrate specificity. The polypeptide is Putative outer membrane porin BglH (bglH) (Escherichia coli O6:H1 (strain CFT073 / ATCC 700928 / UPEC)).